Reading from the N-terminus, the 571-residue chain is Proline--tRNA ligase (571 aa).

Belongs to the class-II aminoacyl-tRNA synthetase family. ProS type 1 subfamily. In terms of assembly, homodimer.

Its subcellular location is the cytoplasm. The enzyme catalyses tRNA(Pro) + L-proline + ATP = L-prolyl-tRNA(Pro) + AMP + diphosphate. In terms of biological role, catalyzes the attachment of proline to tRNA(Pro) in a two-step reaction: proline is first activated by ATP to form Pro-AMP and then transferred to the acceptor end of tRNA(Pro). As ProRS can inadvertently accommodate and process non-cognate amino acids such as alanine and cysteine, to avoid such errors it has two additional distinct editing activities against alanine. One activity is designated as 'pretransfer' editing and involves the tRNA(Pro)-independent hydrolysis of activated Ala-AMP. The other activity is designated 'posttransfer' editing and involves deacylation of mischarged Ala-tRNA(Pro). The misacylated Cys-tRNA(Pro) is not edited by ProRS. The polypeptide is Proline--tRNA ligase (Pediococcus pentosaceus (strain ATCC 25745 / CCUG 21536 / LMG 10740 / 183-1w)).